Consider the following 393-residue polypeptide: CCA-adding enzyme (393 aa).

The ATP site is built by Gly27 and Arg30. Residues Gly27 and Arg30 each coordinate CTP. The Mg(2+) site is built by Asp40 and Asp42. Residues Arg111, Asp154, Arg157, Arg160, and Arg163 each contribute to the ATP site. 5 residues coordinate CTP: Arg111, Asp154, Arg157, Arg160, and Arg163.

The protein belongs to the tRNA nucleotidyltransferase/poly(A) polymerase family. Bacterial CCA-adding enzyme type 3 subfamily. Homodimer. Mg(2+) is required as a cofactor.

It carries out the reaction a tRNA precursor + 2 CTP + ATP = a tRNA with a 3' CCA end + 3 diphosphate. It catalyses the reaction a tRNA with a 3' CCA end + 2 CTP + ATP = a tRNA with a 3' CCACCA end + 3 diphosphate. Its function is as follows. Catalyzes the addition and repair of the essential 3'-terminal CCA sequence in tRNAs without using a nucleic acid template. Adds these three nucleotides in the order of C, C, and A to the tRNA nucleotide-73, using CTP and ATP as substrates and producing inorganic pyrophosphate. tRNA 3'-terminal CCA addition is required both for tRNA processing and repair. Also involved in tRNA surveillance by mediating tandem CCA addition to generate a CCACCA at the 3' terminus of unstable tRNAs. While stable tRNAs receive only 3'-terminal CCA, unstable tRNAs are marked with CCACCA and rapidly degraded. The polypeptide is CCA-adding enzyme (Listeria innocua serovar 6a (strain ATCC BAA-680 / CLIP 11262)).